We begin with the raw amino-acid sequence, 213 residues long: Orotate phosphoribosyltransferase (213 aa).

A 5-phospho-alpha-D-ribose 1-diphosphate-binding site is contributed by lysine 26. 34–35 (FF) contacts orotate. 5-phospho-alpha-D-ribose 1-diphosphate contacts are provided by residues 72–73 (YK), arginine 98, lysine 99, lysine 102, histidine 104, and 123–131 (DDVISAGTS). Serine 127 and arginine 155 together coordinate orotate.

The protein belongs to the purine/pyrimidine phosphoribosyltransferase family. PyrE subfamily. In terms of assembly, homodimer. It depends on Mg(2+) as a cofactor.

It catalyses the reaction orotidine 5'-phosphate + diphosphate = orotate + 5-phospho-alpha-D-ribose 1-diphosphate. Its pathway is pyrimidine metabolism; UMP biosynthesis via de novo pathway; UMP from orotate: step 1/2. In terms of biological role, catalyzes the transfer of a ribosyl phosphate group from 5-phosphoribose 1-diphosphate to orotate, leading to the formation of orotidine monophosphate (OMP). This is Orotate phosphoribosyltransferase from Neisseria meningitidis serogroup A / serotype 4A (strain DSM 15465 / Z2491).